A 481-amino-acid chain; its full sequence is Probable myosin light chain kinase DDB_G0284661 (481 aa).

In terms of domain architecture, Protein kinase spans 13–269 (YNITDIIGEG…VKQSLAHKWI (257 aa)). Residues 19–27 (IGEGTFSTV) and lysine 43 each bind ATP. The active-site Proton acceptor is aspartate 136. 2 disordered regions span residues 285-315 (PLIT…PSLK) and 345-427 (SNSH…DDDE). The segment covering 379–421 (SNNNINNNNDNNDNNNSNSNNSNNNINNFINNNNNNNNNNSNF) has biased composition (low complexity).

This sequence belongs to the protein kinase superfamily. CAMK Ser/Thr protein kinase family. CaMK subfamily.

The enzyme catalyses L-seryl-[myosin light chain] + ATP = O-phospho-L-seryl-[myosin light chain] + ADP + H(+). The catalysed reaction is L-threonyl-[myosin light chain] + ATP = O-phospho-L-threonyl-[myosin light chain] + ADP + H(+). Its activity is regulated as follows. Does not have a calmodulin-binding domain. Functionally, may phosphorylate a specific serine in the N-terminus of a myosin light chain. In Dictyostelium discoideum (Social amoeba), this protein is Probable myosin light chain kinase DDB_G0284661.